The following is a 282-amino-acid chain: MQEIFLCSISNVRSGDCKEDCAYCTQSSHHQGAIKRYKFKDEKVVLQEARALRELGALGFCLVTSGRELDDEKCEYIAKLAKAINKEELGLHLIACCGRADLEQLEFLRDAGIHSYNHNLETSQNFFPKICSTHTWEERFITCENALRAGLGLCSGGIFGLNESWEDRIEMLRALASLSPHTTPINFFIKNPVLPIDAETLSADEALECVLLAKEFLPNARLMVAGGREVVFKDNDKKEAKLFEYGINAVVLGDYLTTKGKAPKKDIEKLLSYGLTMATSCH.

The Radical SAM core domain maps to 1–228; that stretch reads MQEIFLCSIS…NARLMVAGGR (228 aa). [4Fe-4S] cluster is bound by residues Cys17, Cys21, and Cys24. [2Fe-2S] cluster-binding residues include Cys61, Cys96, Cys154, and Arg221.

Belongs to the radical SAM superfamily. Biotin synthase family. As to quaternary structure, homodimer. [4Fe-4S] cluster is required as a cofactor. [2Fe-2S] cluster serves as cofactor.

The enzyme catalyses (4R,5S)-dethiobiotin + (sulfur carrier)-SH + 2 reduced [2Fe-2S]-[ferredoxin] + 2 S-adenosyl-L-methionine = (sulfur carrier)-H + biotin + 2 5'-deoxyadenosine + 2 L-methionine + 2 oxidized [2Fe-2S]-[ferredoxin]. It functions in the pathway cofactor biosynthesis; biotin biosynthesis; biotin from 7,8-diaminononanoate: step 2/2. Functionally, catalyzes the conversion of dethiobiotin (DTB) to biotin by the insertion of a sulfur atom into dethiobiotin via a radical-based mechanism. The polypeptide is Biotin synthase (Helicobacter pylori (strain G27)).